The following is a 116-amino-acid chain: Chondroitin proteoglycan 7 (116 aa).

The first 19 residues, 1–19, serve as a signal peptide directing secretion; sequence MQTITILALIACVAVPIFA. Positions 29-102 are disordered; sequence DVVESSGEGS…NAVVASDSPK (74 aa). Composition is skewed to low complexity over residues 32 to 41 and 48 to 58; these read ESSGEGSGES and VESSGEGSGES. O-linked (Xyl...) (chondroitin sulfate) serine glycosylation is found at serine 68, serine 72, serine 76, serine 84, and serine 88.

The protein is Chondroitin proteoglycan 7 of Caenorhabditis elegans.